The chain runs to 557 residues: Potassium-transporting ATPase potassium-binding subunit (557 aa).

12 helical membrane passes run 5–25 (GFLL…PLGS), 63–83 (LCAI…MLLG), 132–152 (GLTV…FAFI), 170–190 (LLRI…LFFI), 253–273 (FVQM…FGEV), 283–303 (LLWA…WAEV), 329–349 (VLVS…AVIA), 356–376 (ALGG…FGGV), 379–399 (GLYG…LMIG), 416–436 (LTAL…ALAM), 484–504 (LLAF…MAIA), and 526–546 (LFVG…FIPA).

The protein belongs to the KdpA family. As to quaternary structure, the system is composed of three essential subunits: KdpA, KdpB and KdpC.

Its subcellular location is the cell inner membrane. Its function is as follows. Part of the high-affinity ATP-driven potassium transport (or Kdp) system, which catalyzes the hydrolysis of ATP coupled with the electrogenic transport of potassium into the cytoplasm. This subunit binds the periplasmic potassium ions and delivers the ions to the membrane domain of KdpB through an intramembrane tunnel. The sequence is that of Potassium-transporting ATPase potassium-binding subunit from Shigella flexneri.